Here is a 92-residue protein sequence, read N- to C-terminus: YcgL domain-containing protein ASA_2166 (92 aa).

Residues Met-1–Lys-85 form the YcgL domain.

The sequence is that of YcgL domain-containing protein ASA_2166 from Aeromonas salmonicida (strain A449).